The primary structure comprises 160 residues: Transcription elongation factor GreA (160 aa).

Residues 2-30 (SEKTYPMTLAEKEQLEQELEELKLVRRPE) are a coiled coil.

This sequence belongs to the GreA/GreB family.

In terms of biological role, necessary for efficient RNA polymerase transcription elongation past template-encoded arresting sites. The arresting sites in DNA have the property of trapping a certain fraction of elongating RNA polymerases that pass through, resulting in locked ternary complexes. Cleavage of the nascent transcript by cleavage factors such as GreA or GreB allows the resumption of elongation from the new 3'terminus. GreA releases sequences of 2 to 3 nucleotides. The polypeptide is Transcription elongation factor GreA (Streptococcus mutans serotype c (strain ATCC 700610 / UA159)).